A 721-amino-acid polypeptide reads, in one-letter code: 1,4-alpha-glucan branching enzyme GlgB (721 aa).

The active-site Nucleophile is the Asp-404. The active-site Proton donor is the Glu-457.

Belongs to the glycosyl hydrolase 13 family. GlgB subfamily. In terms of assembly, monomer.

It catalyses the reaction Transfers a segment of a (1-&gt;4)-alpha-D-glucan chain to a primary hydroxy group in a similar glucan chain.. It functions in the pathway glycan biosynthesis; glycogen biosynthesis. Functionally, catalyzes the formation of the alpha-1,6-glucosidic linkages in glycogen by scission of a 1,4-alpha-linked oligosaccharide from growing alpha-1,4-glucan chains and the subsequent attachment of the oligosaccharide to the alpha-1,6 position. In Novosphingobium aromaticivorans (strain ATCC 700278 / DSM 12444 / CCUG 56034 / CIP 105152 / NBRC 16084 / F199), this protein is 1,4-alpha-glucan branching enzyme GlgB.